Reading from the N-terminus, the 378-residue chain is MNKIIIFILFLISILQSVRGFTDTDEIVVLYLEAPLFFSKFGTLLANVNAFHSGLGFYSLNSNETYQVDFVAVPGVLESILPNKIENGEIIWNTSGKVQFSDSIDNTGYWSSEKEIMTINNEIFETFLCWAQNYNESLSYYQLFDVLNRNTNELLVKSVVCNDFVWAGFNALYNLGGKYINDSIIASRDIVTLYTRESIEYVQDGSTNIEVISFYEAMLNISIPKNQTINGLIEELDELFKGNFYLYVNGDYYNVTLDSSPFSFAYSESPLPIGERDLSNITLLESCHFQHSSDNDIILNNKNGIGGWIFIIILLSFTTVYLVGGILINKFKNEKSGLDLIPNKDSWSSLGGLISDGFGFIKSKATGSTSGGNGYSSI.

Residues 1-20 form the signal peptide; the sequence is MNKIIIFILFLISILQSVRG. N-linked (GlcNAc...) asparagine glycosylation is found at N63, N93, N135, N181, N220, N226, N254, and N280. A helical transmembrane segment spans residues 308–328; the sequence is WIFIIILLSFTTVYLVGGILI.

The protein belongs to the CLN5 family.

Its subcellular location is the membrane. In Dictyostelium discoideum (Social amoeba), this protein is Cln5-like protein 1 (cln5la).